A 614-amino-acid polypeptide reads, in one-letter code: Major facilitator superfamily domain-containing protein 6-like protein B (614 aa).

Helical transmembrane passes span 41–61 (LGLG…VHLL) and 78–98 (FFIM…AFYP). Positions 177 to 191 (HQRFTDQFPSSSPLT) are enriched in polar residues. The disordered stretch occupies residues 177–243 (HQRFTDQFPS…PFATHPNVSH (67 aa)). Low complexity predominate over residues 205–227 (GSGKAQKANSSKSSASNSKQRSS). The next 9 membrane-spanning stretches (helical) occupy residues 270–290 (IFLI…PLEW), 312–332 (LWIW…FLID), 345–365 (VSFH…LSTL), 393–413 (IVLT…IQNF), 425–445 (ELYM…LYFF), 457–477 (WMVV…SFLW), 480–500 (WSVV…WWAI), 520–540 (LRWL…GFII), and 546–566 (AVLY…FLLV).

The protein belongs to the major facilitator superfamily. MFSD6 family.

The protein resides in the membrane. In Xenopus laevis (African clawed frog), this protein is Major facilitator superfamily domain-containing protein 6-like protein B (mfsd6l-b).